A 261-amino-acid chain; its full sequence is Gap junction beta-6 protein (261 aa).

The Cytoplasmic segment spans residues 1–22 (MDWGTLHTFVGGVNKHSTSIGK). A helical transmembrane segment spans residues 23 to 45 (VWVTVLFVFRVMILVVAAQEVWG). Residues 46–75 (DEQEDFVCNTLQPGCRNVCYDHFFPVSHIR) lie on the Extracellular side of the membrane. Residues 76–98 (LWALQLIFVSTPALLVAMHVAYY) traverse the membrane as a helical segment. Topologically, residues 99–131 (RHEAARRFRRGETRSEFKDLEDIKRQKVRIEGS) are cytoplasmic. A helical membrane pass occupies residues 132-154 (LWWTYTSSIFFRIVFEAAFMYVF). At 155-192 (YFLYNGYHLPWVLKCGIQPCPNLVDCFISRPTEKTVFT) the chain is on the extracellular side. A helical membrane pass occupies residues 193-215 (IFMISASVICMLLNVAELCYLLL). Residues 216-261 (KVCFRRSKRAQTQKAPPNHALKESKQNEMNELISEGGQNAITGFPS) are Cytoplasmic-facing.

This sequence belongs to the connexin family. Beta-type (group I) subfamily. In terms of assembly, a connexon is composed of a hexamer of connexins. Interacts with CNST.

Its subcellular location is the cell membrane. It localises to the cell junction. The protein resides in the gap junction. Its function is as follows. One gap junction consists of a cluster of closely packed pairs of transmembrane channels, the connexons, through which materials of low MW diffuse from one cell to a neighboring cell. The sequence is that of Gap junction beta-6 protein (GJB6) from Bos taurus (Bovine).